Here is a 180-residue protein sequence, read N- to C-terminus: Adenine phosphoribosyltransferase (180 aa).

Belongs to the purine/pyrimidine phosphoribosyltransferase family. In terms of assembly, homodimer.

The protein resides in the cytoplasm. The enzyme catalyses AMP + diphosphate = 5-phospho-alpha-D-ribose 1-diphosphate + adenine. It functions in the pathway purine metabolism; AMP biosynthesis via salvage pathway; AMP from adenine: step 1/1. Its function is as follows. Catalyzes a salvage reaction resulting in the formation of AMP, that is energically less costly than de novo synthesis. The polypeptide is Adenine phosphoribosyltransferase (Mycolicibacterium paratuberculosis (strain ATCC BAA-968 / K-10) (Mycobacterium paratuberculosis)).